A 355-amino-acid chain; its full sequence is Type II restriction enzyme CfrBI (355 aa).

It catalyses the reaction Endonucleolytic cleavage of DNA to give specific double-stranded fragments with terminal 5'-phosphates.. A P subtype restriction enzyme that recognizes the double-stranded sequence 5'-CCWWGG-3' and cleaves after C-1. The protein is Type II restriction enzyme CfrBI of Citrobacter freundii.